The sequence spans 901 residues: Valine--tRNA ligase (901 aa).

The short motif at 536 to 540 (KLSKS) is the 'KMSKS' region element. Lysine 539 is an ATP binding site. Positions 831–901 (LEGLISFEKE…KLQGNLEVLS (71 aa)) form a coiled coil.

It belongs to the class-I aminoacyl-tRNA synthetase family. ValS type 1 subfamily. In terms of assembly, monomer.

It is found in the cytoplasm. The catalysed reaction is tRNA(Val) + L-valine + ATP = L-valyl-tRNA(Val) + AMP + diphosphate. Its function is as follows. Catalyzes the attachment of valine to tRNA(Val). As ValRS can inadvertently accommodate and process structurally similar amino acids such as threonine, to avoid such errors, it has a 'posttransfer' editing activity that hydrolyzes mischarged Thr-tRNA(Val) in a tRNA-dependent manner. In Chlorobaculum tepidum (strain ATCC 49652 / DSM 12025 / NBRC 103806 / TLS) (Chlorobium tepidum), this protein is Valine--tRNA ligase.